The chain runs to 757 residues: 5-methyltetrahydropteroyltriglutamate--homocysteine methyltransferase (757 aa).

5-methyltetrahydropteroyltri-L-glutamate is bound by residues 15 to 18 and Lys-114; that span reads RELK. L-homocysteine contacts are provided by residues 428–430 and Glu-481; that span reads IGS. L-methionine contacts are provided by residues 428–430 and Glu-481; that span reads IGS. Residues 512–513 and Trp-558 each bind 5-methyltetrahydropteroyltri-L-glutamate; that span reads RC. Asp-596 lines the L-homocysteine pocket. Asp-596 lines the L-methionine pocket. Glu-602 serves as a coordination point for 5-methyltetrahydropteroyltri-L-glutamate. Residues His-639, Cys-641, and Glu-663 each contribute to the Zn(2+) site. The active-site Proton donor is the His-692. Cys-724 contributes to the Zn(2+) binding site.

Belongs to the vitamin-B12 independent methionine synthase family. The cofactor is Zn(2+).

It carries out the reaction 5-methyltetrahydropteroyltri-L-glutamate + L-homocysteine = tetrahydropteroyltri-L-glutamate + L-methionine. The protein operates within amino-acid biosynthesis; L-methionine biosynthesis via de novo pathway; L-methionine from L-homocysteine (MetE route): step 1/1. Functionally, catalyzes the transfer of a methyl group from 5-methyltetrahydrofolate to homocysteine resulting in methionine formation. In Lactococcus lactis subsp. cremoris (strain MG1363), this protein is 5-methyltetrahydropteroyltriglutamate--homocysteine methyltransferase.